A 562-amino-acid chain; its full sequence is Urocanate hydratase (562 aa).

Residues 52–53 (GG), Gln-130, 176–178 (GMG), Glu-196, Arg-201, 242–243 (NA), 263–267 (QTSAH), 273–274 (YL), and Tyr-322 each bind NAD(+). The active site involves Cys-410. Gly-492 is an NAD(+) binding site.

This sequence belongs to the urocanase family. It depends on NAD(+) as a cofactor.

The protein localises to the cytoplasm. It catalyses the reaction 4-imidazolone-5-propanoate = trans-urocanate + H2O. The protein operates within amino-acid degradation; L-histidine degradation into L-glutamate; N-formimidoyl-L-glutamate from L-histidine: step 2/3. In terms of biological role, catalyzes the conversion of urocanate to 4-imidazolone-5-propionate. The polypeptide is Urocanate hydratase (Shewanella pealeana (strain ATCC 700345 / ANG-SQ1)).